We begin with the raw amino-acid sequence, 129 residues long: Probable tautomerase YrdN (129 aa).

Residue proline 2 is the Proton acceptor; via imino nitrogen of the active site.

Belongs to the 4-oxalocrotonate tautomerase family.

Putative target of GltR. This chain is Probable tautomerase YrdN (yrdN), found in Bacillus subtilis (strain 168).